The primary structure comprises 99 residues: Nucleoid-associated protein EbfC (99 aa).

It belongs to the YbaB/EbfC family. Homodimer.

It is found in the cytoplasm. The protein resides in the nucleoid. Its function is as follows. Binds to DNA and alters its conformation. May be involved in regulation of gene expression, nucleoid organization and DNA protection. The chain is Nucleoid-associated protein EbfC from Borreliella burgdorferi (strain ZS7) (Borrelia burgdorferi).